We begin with the raw amino-acid sequence, 247 residues long: Probable transcriptional regulatory protein Gbem_3313 (247 aa).

The protein belongs to the TACO1 family.

Its subcellular location is the cytoplasm. This chain is Probable transcriptional regulatory protein Gbem_3313, found in Citrifermentans bemidjiense (strain ATCC BAA-1014 / DSM 16622 / JCM 12645 / Bem) (Geobacter bemidjiensis).